The primary structure comprises 428 residues: D-amino acid dehydrogenase (428 aa).

An FAD-binding site is contributed by 3–17 (VVVLGSGVVGVTSAY).

Belongs to the DadA oxidoreductase family. The cofactor is FAD.

It carries out the reaction a D-alpha-amino acid + A + H2O = a 2-oxocarboxylate + AH2 + NH4(+). It functions in the pathway amino-acid degradation; D-alanine degradation; NH(3) and pyruvate from D-alanine: step 1/1. In terms of biological role, oxidative deamination of D-amino acids. In Paraburkholderia phymatum (strain DSM 17167 / CIP 108236 / LMG 21445 / STM815) (Burkholderia phymatum), this protein is D-amino acid dehydrogenase.